The sequence spans 388 residues: Succinate--CoA ligase [ADP-forming] subunit beta (388 aa).

Residues 9 to 244 (KSLFAEYGLP…PSQDDAREAH (236 aa)) form the ATP-grasp domain. ATP-binding positions include Lys-46, 53–55 (GRG), Glu-99, Thr-102, and Glu-107. Mg(2+) is bound by residues Asn-199 and Asp-213. Substrate-binding positions include Asn-264 and 321–323 (GIV).

It belongs to the succinate/malate CoA ligase beta subunit family. As to quaternary structure, heterotetramer of two alpha and two beta subunits. It depends on Mg(2+) as a cofactor.

It carries out the reaction succinate + ATP + CoA = succinyl-CoA + ADP + phosphate. It catalyses the reaction GTP + succinate + CoA = succinyl-CoA + GDP + phosphate. Its pathway is carbohydrate metabolism; tricarboxylic acid cycle; succinate from succinyl-CoA (ligase route): step 1/1. Functionally, succinyl-CoA synthetase functions in the citric acid cycle (TCA), coupling the hydrolysis of succinyl-CoA to the synthesis of either ATP or GTP and thus represents the only step of substrate-level phosphorylation in the TCA. The beta subunit provides nucleotide specificity of the enzyme and binds the substrate succinate, while the binding sites for coenzyme A and phosphate are found in the alpha subunit. The chain is Succinate--CoA ligase [ADP-forming] subunit beta from Shewanella oneidensis (strain ATCC 700550 / JCM 31522 / CIP 106686 / LMG 19005 / NCIMB 14063 / MR-1).